Consider the following 325-residue polypeptide: Beta-ketoacyl-[acyl-carrier-protein] synthase III (325 aa).

Residues cysteine 116 and histidine 252 contribute to the active site. The interval 253–257 (QANLR) is ACP-binding. The active site involves asparagine 282.

This sequence belongs to the thiolase-like superfamily. FabH family. Homodimer.

It localises to the cytoplasm. The enzyme catalyses malonyl-[ACP] + acetyl-CoA + H(+) = 3-oxobutanoyl-[ACP] + CO2 + CoA. The protein operates within lipid metabolism; fatty acid biosynthesis. Its function is as follows. Catalyzes the condensation reaction of fatty acid synthesis by the addition to an acyl acceptor of two carbons from malonyl-ACP. Catalyzes the first condensation reaction which initiates fatty acid synthesis and may therefore play a role in governing the total rate of fatty acid production. Possesses both acetoacetyl-ACP synthase and acetyl transacylase activities. Its substrate specificity determines the biosynthesis of branched-chain and/or straight-chain of fatty acids. This Xanthomonas euvesicatoria pv. vesicatoria (strain 85-10) (Xanthomonas campestris pv. vesicatoria) protein is Beta-ketoacyl-[acyl-carrier-protein] synthase III.